A 292-amino-acid chain; its full sequence is Norajmaline N-methyltransferase (292 aa).

Residues 71 to 80 (KNMLDIGCGV) form an SAM motif I region. The tract at residues 134–142 (KDGTFDLVL) is SAM motif II. The short motif at 135–141 (DGTFDLV) is the Vacuolar targeting signal element. The segment at 161–170 (IRVAAPGAPI) is SAM motif III.

This sequence belongs to the class I-like SAM-binding methyltransferase superfamily. gTMT family. In terms of assembly, homodimer. In terms of tissue distribution, mainly expressed in mature roots and, to a lesser extent, in leaves, stems and flowers.

Its subcellular location is the vacuole membrane. It carries out the reaction norajmaline + S-adenosyl-L-methionine = ajmaline + S-adenosyl-L-homocysteine + H(+). The catalysed reaction is 4-methylnorajmaline + S-adenosyl-L-methionine = 4-methylajmaline + S-adenosyl-L-homocysteine + H(+). Its pathway is alkaloid biosynthesis; ajmaline biosynthesis. Its function is as follows. N-methyltransferase involved in the biosynthesis of ajmaline-type monoterpenoid indole alkaloids (MIAs) natural products, important plant-derived pharmaceuticals used in the therapy of heart disorders. Catalyzes the indole N-methylation of norajmaline to produce ajmaline. Also able, with a lower efficiency, to mediates the conversion of 4-methylnorajmaline to 4-methylajmaline. The polypeptide is Norajmaline N-methyltransferase (Rauvolfia serpentina (Serpentine wood)).